Consider the following 194-residue polypeptide: PBAN-type neuropeptides (194 aa).

A signal peptide spans 1 to 23 (MFNQTQLFVFLAVFTTSSVLGNN). Leu47 carries the post-translational modification Leucine amide. Positions 51–94 (SLRISTEDNRQAFFKLLEAADALKYYYDQLPYEMQADEPETRVT) are excised as a propeptide. 4 positions are modified to leucine amide: Leu103, Leu123, Leu159, and Leu169. Positions 172–194 (ELSYDMMPNKIRVVRSTNKTRST) are excised as a propeptide.

It belongs to the pyrokinin family. Expressed in the subesophageal ganglions. Not found in corpora cardiaca, corpora allata and thoracic ganglia.

The protein resides in the secreted. In terms of biological role, a hormone that controls sex pheromone production in females and pheromone responsiveness in male. Also mediates visceral muscle contractile activity (myotropic activity). In Helicoverpa zea (Corn earworm moth), this protein is PBAN-type neuropeptides.